Consider the following 339-residue polypeptide: 7,8-didemethyl-8-hydroxy-5-deazariboflavin synthase (339 aa).

Positions 13–258 (ITYSKNIFIP…RDTDVSIQVP (246 aa)) constitute a Radical SAM core domain. Cysteine 27, cysteine 31, and cysteine 34 together coordinate [4Fe-4S] cluster.

The protein belongs to the radical SAM superfamily. CofG family. Consists of two subunits, CofG and CofH. [4Fe-4S] cluster serves as cofactor.

It catalyses the reaction 5-amino-5-(4-hydroxybenzyl)-6-(D-ribitylimino)-5,6-dihydrouracil + S-adenosyl-L-methionine = 7,8-didemethyl-8-hydroxy-5-deazariboflavin + 5'-deoxyadenosine + L-methionine + NH4(+) + H(+). It functions in the pathway cofactor biosynthesis; coenzyme F0 biosynthesis. Catalyzes the radical-mediated synthesis of 7,8-didemethyl-8-hydroxy-5-deazariboflavin from 5-amino-5-(4-hydroxybenzyl)-6-(D-ribitylimino)-5,6-dihydrouracil. The protein is 7,8-didemethyl-8-hydroxy-5-deazariboflavin synthase of Methanobrevibacter smithii (strain ATCC 35061 / DSM 861 / OCM 144 / PS).